The primary structure comprises 221 residues: Keratin-associated protein 10-3 (221 aa).

18 repeat units span residues 26–30 (CCEPP), 31–35 (CCATS), 36–40 (CCAPA), 57–61 (CCQAA), 79–83 (CCQQS), 89–93 (CCTSS), 99–103 (CCVPV), 104–108 (CCKPV), 109–113 (CCVPV), 114–118 (CCKPV), 119–123 (CCKPI), 124–128 (CCVPV), 136–140 (CCQQS), 146–150 (CCTTS), 151–155 (CCRPS), 177–181 (CCAPA), 188–192 (CCRPA), and 210–214 (CCGLS). An 18 X 5 AA repeats of C-C-X(3) region spans residues 26 to 214 (CCEPPCCATS…RLSSACCGLS (189 aa)).

The protein belongs to the KRTAP type 10 family. Interacts with hair keratins. Restricted to a narrow region of the hair fiber cuticle, lying approximately 20 cell layers above the apex of the dermal papilla of the hair root; not detected in any other tissues.

In terms of biological role, in the hair cortex, hair keratin intermediate filaments are embedded in an interfilamentous matrix, consisting of hair keratin-associated proteins (KRTAP), which are essential for the formation of a rigid and resistant hair shaft through their extensive disulfide bond cross-linking with abundant cysteine residues of hair keratins. The matrix proteins include the high-sulfur and high-glycine-tyrosine keratins. The sequence is that of Keratin-associated protein 10-3 (KRTAP10-3) from Homo sapiens (Human).